The primary structure comprises 295 residues: Small ribosomal subunit protein uS2 (295 aa).

Ser-2 is subject to N-acetylserine. A Phosphoserine modification is found at Ser-43. An N6-acetyllysine modification is found at Lys-52. The interval 54 to 113 is interaction with PPP1R16B; it reads TWEKLLLAARAIVAIENPADVSVISSRNTGQRAVLKFAAATGATPIAGRFTPGTFTNQIQ. An N6-acetyllysine; alternate modification is found at Lys-89. Lys-89 participates in a covalent cross-link: Glycyl lysine isopeptide (Lys-Gly) (interchain with G-Cter in SUMO2); alternate. The residue at position 97 (Thr-97) is a Phosphothreonine. 2 laminin-binding regions span residues 161–180 and 205–229; these read IPCNNKGAHSVGLMWWMLAR and RDPEEIEKEEQAAAEKAVTKEEFQG. The segment covering 214 to 227 has biased composition (basic and acidic residues); that stretch reads EQAAAEKAVTKEEF. The segment at 214–240 is disordered; sequence EQAAAEKAVTKEEFQGEWTAPAPEFTA. 4 [DE]-W-[ST] repeats span residues 230–232, 247–249, 266–268, and 275–277; these read EWT and DWS. The interval 242-295 is laminin-binding; it reads QPEVADWSEGVQVPSVPIQQFPTEDWSARPFTEDWSAAPTAQATEWVGTTSELS. The disordered stretch occupies residues 263 to 295; the sequence is PTEDWSARPFTEDWSAAPTAQATEWVGTTSELS. Residues 280–295 show a composition bias toward polar residues; sequence PTAQATEWVGTTSELS.

This sequence belongs to the universal ribosomal protein uS2 family. Monomer (37LRP) and homodimer (67LR). Component of the small ribosomal subunit. Mature ribosomes consist of a small (40S) and a large (60S) subunit. The 40S subunit contains about 33 different proteins and 1 molecule of RNA (18S). The 60S subunit contains about 49 different proteins and 3 molecules of RNA (28S, 5.8S and 5S). Interacts with RPS21. Interacts with several laminins including at least LAMB1. Interacts with MDK. The mature dimeric form interacts with PPP1R16B (via its fourth ankyrin repeat). Interacts with PPP1CA only in the presence of PPP1R16B. Post-translationally, acylated. Acylation may be a prerequisite for conversion of the monomeric 37 kDa laminin receptor precursor (37LRP) to the mature dimeric 67 kDa laminin receptor (67LR), and may provide a mechanism for membrane association. Cleaved by stromelysin-3 (ST3) at the cell surface. Cleavage by stromelysin-3 may be a mechanism to alter cell-extracellular matrix interactions.

It localises to the cell membrane. The protein localises to the cytoplasm. The protein resides in the nucleus. In terms of biological role, required for the assembly and/or stability of the 40S ribosomal subunit. Required for the processing of the 20S rRNA-precursor to mature 18S rRNA in a late step of the maturation of 40S ribosomal subunits. Also functions as a cell surface receptor for laminin. Plays a role in cell adhesion to the basement membrane and in the consequent activation of signaling transduction pathways. May play a role in cell fate determination and tissue morphogenesis. Also acts as a receptor for several other ligands, including the pathogenic prion protein, viruses, and bacteria. Acts as a PPP1R16B-dependent substrate of PPP1CA. This is Small ribosomal subunit protein uS2 from Ovis aries (Sheep).